The following is a 537-amino-acid chain: Chaperonin GroEL (537 aa).

ATP is bound by residues 29 to 32 (TLGP), 86 to 90 (DGTTT), Gly413, 477 to 479 (NAA), and Asp493.

The protein belongs to the chaperonin (HSP60) family. In terms of assembly, forms a cylinder of 14 subunits composed of two heptameric rings stacked back-to-back. Interacts with the co-chaperonin GroES.

It localises to the cytoplasm. The catalysed reaction is ATP + H2O + a folded polypeptide = ADP + phosphate + an unfolded polypeptide.. Functionally, together with its co-chaperonin GroES, plays an essential role in assisting protein folding. The GroEL-GroES system forms a nano-cage that allows encapsulation of the non-native substrate proteins and provides a physical environment optimized to promote and accelerate protein folding. This is Chaperonin GroEL from Lactobacillus delbrueckii subsp. bulgaricus (strain ATCC 11842 / DSM 20081 / BCRC 10696 / JCM 1002 / NBRC 13953 / NCIMB 11778 / NCTC 12712 / WDCM 00102 / Lb 14).